Here is a 545-residue protein sequence, read N- to C-terminus: CTP synthase (545 aa).

Positions 1–266 (MTTNYIFVTG…DDYICKRFSL (266 aa)) are amidoligase domain. S14 is a CTP binding site. S14 lines the UTP pocket. ATP contacts are provided by residues 15-20 (SLGKGI) and D72. Positions 72 and 140 each coordinate Mg(2+). Residues 147–149 (DIE), 187–192 (KTKPTQ), and K223 contribute to the CTP site. Residues 187 to 192 (KTKPTQ) and K223 each bind UTP. 239–241 (KDV) is a binding site for ATP. The region spanning 291-542 (TIGMVGKYIE…VKAASEYQKR (252 aa)) is the Glutamine amidotransferase type-1 domain. G352 lines the L-glutamine pocket. The active-site Nucleophile; for glutamine hydrolysis is the C379. L-glutamine contacts are provided by residues 380–383 (LGMQ), E403, and R470. Residues H515 and E517 contribute to the active site.

Belongs to the CTP synthase family. As to quaternary structure, homotetramer.

It carries out the reaction UTP + L-glutamine + ATP + H2O = CTP + L-glutamate + ADP + phosphate + 2 H(+). The enzyme catalyses L-glutamine + H2O = L-glutamate + NH4(+). The catalysed reaction is UTP + NH4(+) + ATP = CTP + ADP + phosphate + 2 H(+). It functions in the pathway pyrimidine metabolism; CTP biosynthesis via de novo pathway; CTP from UDP: step 2/2. Allosterically activated by GTP, when glutamine is the substrate; GTP has no effect on the reaction when ammonia is the substrate. The allosteric effector GTP functions by stabilizing the protein conformation that binds the tetrahedral intermediate(s) formed during glutamine hydrolysis. Inhibited by the product CTP, via allosteric rather than competitive inhibition. Functionally, catalyzes the ATP-dependent amination of UTP to CTP with either L-glutamine or ammonia as the source of nitrogen. Regulates intracellular CTP levels through interactions with the four ribonucleotide triphosphates. The protein is CTP synthase of Citrobacter koseri (strain ATCC BAA-895 / CDC 4225-83 / SGSC4696).